The following is a 515-amino-acid chain: Probable cytochrome P450 6d4 (515 aa).

Cysteine 457 contacts heme.

It belongs to the cytochrome P450 family. Requires heme as cofactor.

It localises to the endoplasmic reticulum membrane. The protein resides in the microsome membrane. Functionally, may be involved in the metabolism of insect hormones and in the breakdown of synthetic insecticides. This Drosophila melanogaster (Fruit fly) protein is Probable cytochrome P450 6d4 (Cyp6d4).